Consider the following 38-residue polypeptide: Toxin BmK NSPK (38 aa).

3 cysteine pairs are disulfide-bonded: C7–C27, C13–C32, and C17–C34.

Expressed by the venom gland.

The protein localises to the secreted. Blocks voltage-gated potassium (Kv) channel and augments neurite extension via NGF/TrkA signaling pathway. This Olivierus martensii (Manchurian scorpion) protein is Toxin BmK NSPK.